Consider the following 677-residue polypeptide: Nuclear fusion protein FUS2 (677 aa).

Thr20 is modified (phosphothreonine). A phosphoserine mark is found at Ser67, Ser72, and Ser84. Position 88 is a phosphothreonine (Thr88). A phosphoserine mark is found at Ser100 and Ser106. A DH domain is found at 112–326 (KFYKIVQEFY…KYSLFSNKLE (215 aa)).

It localises to the cell tip. Promotes cell fusion during zygote formation. The chain is Nuclear fusion protein FUS2 (FUS2) from Saccharomyces cerevisiae (strain ATCC 204508 / S288c) (Baker's yeast).